We begin with the raw amino-acid sequence, 170 residues long: Probable peptide methionine sulfoxide reductase (170 aa).

It belongs to the MsrA Met sulfoxide reductase family.

It is found in the cytoplasm. The protein localises to the nucleus. The enzyme catalyses L-methionyl-[protein] + [thioredoxin]-disulfide + H2O = L-methionyl-(S)-S-oxide-[protein] + [thioredoxin]-dithiol. It catalyses the reaction [thioredoxin]-disulfide + L-methionine + H2O = L-methionine (S)-S-oxide + [thioredoxin]-dithiol. Its function is as follows. Has an important function as a repair enzyme for proteins that have been inactivated by oxidation. Catalyzes the reversible oxidation-reduction of methionine sulfoxide in proteins to methionine. The chain is Probable peptide methionine sulfoxide reductase (mxr1) from Schizosaccharomyces pombe (strain 972 / ATCC 24843) (Fission yeast).